Consider the following 428-residue polypeptide: GTPase Obg (428 aa).

The 158-residue stretch at 1-158 (MFVDQVKVYV…RDVILELKVL (158 aa)) folds into the Obg domain. Residues 118 to 145 (KGGRGGRGNSRFATPANPAPQLSENGEP) form a disordered region. An OBG-type G domain is found at 159-329 (ADVGLVGFPS…LLFEIANQLE (171 aa)). Residues 165–172 (GFPSVGKS), 190–194 (FTTLV), 212–215 (DLPG), 282–285 (NKMD), and 310–312 (SAI) contribute to the GTP site. Residues Ser172 and Thr192 each coordinate Mg(2+). One can recognise an OCT domain in the interval 350-428 (RFDEGDAPFE…LLEFEFEFID (79 aa)).

The protein belongs to the TRAFAC class OBG-HflX-like GTPase superfamily. OBG GTPase family. Monomer. Requires Mg(2+) as cofactor.

It localises to the cytoplasm. Its function is as follows. An essential GTPase which binds GTP, GDP and possibly (p)ppGpp with moderate affinity, with high nucleotide exchange rates and a fairly low GTP hydrolysis rate. Plays a role in control of the cell cycle, stress response, ribosome biogenesis and in those bacteria that undergo differentiation, in morphogenesis control. This Bacillus pumilus (strain SAFR-032) protein is GTPase Obg.